Here is a 168-residue protein sequence, read N- to C-terminus: 6-pyruvoyl tetrahydrobiopterin synthase (168 aa).

His19 is a Zn(2+) binding site. The active-site Proton acceptor is Cys38. The Zn(2+) site is built by His44 and His46. Catalysis depends on charge relay system residues His85 and Glu130. Phosphoserine is present on Ser159. Thr161 carries the phosphothreonine modification. Phosphoserine occurs at positions 164, 165, and 167.

This sequence belongs to the PTPS family. Homohexamer formed of two homotrimers in a head to head fashion. It depends on Zn(2+) as a cofactor.

It carries out the reaction 7,8-dihydroneopterin 3'-triphosphate = 6-pyruvoyl-5,6,7,8-tetrahydropterin + triphosphate + H(+). Its pathway is cofactor biosynthesis; tetrahydrobiopterin biosynthesis; tetrahydrobiopterin from 7,8-dihydroneopterin triphosphate: step 1/3. Functionally, required for pigment and biopterin synthesis. This is 6-pyruvoyl tetrahydrobiopterin synthase (pr) from Drosophila melanogaster (Fruit fly).